The sequence spans 1070 residues: DNA-directed RNA polymerase subunit beta (1070 aa).

Belongs to the RNA polymerase beta chain family. In terms of assembly, in plastids the minimal PEP RNA polymerase catalytic core is composed of four subunits: alpha, beta, beta', and beta''. When a (nuclear-encoded) sigma factor is associated with the core the holoenzyme is formed, which can initiate transcription.

The protein resides in the plastid. The protein localises to the chloroplast. The catalysed reaction is RNA(n) + a ribonucleoside 5'-triphosphate = RNA(n+1) + diphosphate. In terms of biological role, DNA-dependent RNA polymerase catalyzes the transcription of DNA into RNA using the four ribonucleoside triphosphates as substrates. This Nandina domestica (Heavenly bamboo) protein is DNA-directed RNA polymerase subunit beta.